A 628-amino-acid polypeptide reads, in one-letter code: Putative pentatricopeptide repeat-containing protein At3g13770, mitochondrial (628 aa).

A mitochondrion-targeting transit peptide spans 1-19; the sequence is MFNLMRLIHRSFSSSPTNY. 11 PPR repeats span residues 51-85, 86-116, 117-151, 152-186, 187-217, 218-252, 253-287, 288-318, 319-353, 355-389, and 392-422; these read GFHGYDALLNACLDKRALRDGQRVHAHMIKTRYLP, ATYLRTRLLIFYGKCDCLEDARKVLDEMPEK, NVVSWTAMISRYSQTGHSSEALTVFAEMMRSDGKP, NEFTFATVLTSCIRASGLGLGKQIHGLIVKWNYDS, HIFVGSSLLDMYAKAGQIKEAREIFECLPER, DVVSCTAIIAGYAQLGLDEEALEMFHRLHSEGMSP, NYVTYASLLTALSGLALLDHGKQAHCHVLRRELPF, YAVLQNSLIDMYSKCGNLSYARRLFDNMPER, TAISWNAMLVGYSKHGLGREVLELFRLMRDEKRVK, DAVTLLAVLSGCSHGRMEDTGLNIFDGMVAGEYGT, and GTEHYGCIVDMLGRAGRIDEAFEFIKRMPSK. The tract at residues 427–502 is type E motif; the sequence is VLGSLLGACR…EPGRSWIQHE (76 aa). The type E(+) motif stretch occupies residues 503 to 533; the sequence is QTLHYFHANDRTHPRREEVLAKMKEISIKMK. The tract at residues 534-628 is type DYW motif; sequence QAGYVPDLSC…DGICSCGDYW (95 aa).

This sequence belongs to the PPR family. PCMP-H subfamily.

Its subcellular location is the mitochondrion. The protein is Putative pentatricopeptide repeat-containing protein At3g13770, mitochondrial (PCMP-H85) of Arabidopsis thaliana (Mouse-ear cress).